We begin with the raw amino-acid sequence, 362 residues long: Phosphoserine aminotransferase (362 aa).

The L-glutamate site is built by Ser9 and Arg42. Residues 76-77 (GR), Trp102, Thr153, Asp174, and Gln197 contribute to the pyridoxal 5'-phosphate site. Lys198 carries the N6-(pyridoxal phosphate)lysine modification. 239 to 240 (NT) contributes to the pyridoxal 5'-phosphate binding site.

The protein belongs to the class-V pyridoxal-phosphate-dependent aminotransferase family. SerC subfamily. Homodimer. Pyridoxal 5'-phosphate is required as a cofactor.

The protein resides in the cytoplasm. It carries out the reaction O-phospho-L-serine + 2-oxoglutarate = 3-phosphooxypyruvate + L-glutamate. The catalysed reaction is 4-(phosphooxy)-L-threonine + 2-oxoglutarate = (R)-3-hydroxy-2-oxo-4-phosphooxybutanoate + L-glutamate. The protein operates within amino-acid biosynthesis; L-serine biosynthesis; L-serine from 3-phospho-D-glycerate: step 2/3. Its pathway is cofactor biosynthesis; pyridoxine 5'-phosphate biosynthesis; pyridoxine 5'-phosphate from D-erythrose 4-phosphate: step 3/5. In terms of biological role, catalyzes the reversible conversion of 3-phosphohydroxypyruvate to phosphoserine and of 3-hydroxy-2-oxo-4-phosphonooxybutanoate to phosphohydroxythreonine. This Citrobacter koseri (strain ATCC BAA-895 / CDC 4225-83 / SGSC4696) protein is Phosphoserine aminotransferase.